The chain runs to 376 residues: UDP-N-acetylglucosamine--N-acetylmuramyl-(pentapeptide) pyrophosphoryl-undecaprenol N-acetylglucosamine transferase (376 aa).

UDP-N-acetyl-alpha-D-glucosamine-binding positions include 11-13 (TGG), asparagine 117, arginine 160, serine 208, and glutamine 310.

The protein belongs to the glycosyltransferase 28 family. MurG subfamily.

The protein localises to the cell inner membrane. It carries out the reaction di-trans,octa-cis-undecaprenyl diphospho-N-acetyl-alpha-D-muramoyl-L-alanyl-D-glutamyl-meso-2,6-diaminopimeloyl-D-alanyl-D-alanine + UDP-N-acetyl-alpha-D-glucosamine = di-trans,octa-cis-undecaprenyl diphospho-[N-acetyl-alpha-D-glucosaminyl-(1-&gt;4)]-N-acetyl-alpha-D-muramoyl-L-alanyl-D-glutamyl-meso-2,6-diaminopimeloyl-D-alanyl-D-alanine + UDP + H(+). It participates in cell wall biogenesis; peptidoglycan biosynthesis. Cell wall formation. Catalyzes the transfer of a GlcNAc subunit on undecaprenyl-pyrophosphoryl-MurNAc-pentapeptide (lipid intermediate I) to form undecaprenyl-pyrophosphoryl-MurNAc-(pentapeptide)GlcNAc (lipid intermediate II). In Rickettsia massiliae (strain Mtu5), this protein is UDP-N-acetylglucosamine--N-acetylmuramyl-(pentapeptide) pyrophosphoryl-undecaprenol N-acetylglucosamine transferase.